We begin with the raw amino-acid sequence, 110 residues long: MRLIILCLAALVLLIQFPLWLGKGGWLRVWDLDQQVIAAQKKNDELRARNAKLNSEVQDLKEGTGAVEERARYELGMIKENEIFVQVLDPNKKSSFVSIPPPKIEPKEKR.

Topologically, residues 1–3 (MRL) are cytoplasmic. A helical transmembrane segment spans residues 4 to 21 (IILCLAALVLLIQFPLWL). Residues 22 to 110 (GKGGWLRVWD…PPKIEPKEKR (89 aa)) are Periplasmic-facing. Residues 31–64 (DLDQQVIAAQKKNDELRARNAKLNSEVQDLKEGT) adopt a coiled-coil conformation.

Belongs to the FtsB family. As to quaternary structure, part of a complex composed of FtsB, FtsL and FtsQ.

The protein resides in the cell inner membrane. Functionally, essential cell division protein. May link together the upstream cell division proteins, which are predominantly cytoplasmic, with the downstream cell division proteins, which are predominantly periplasmic. The protein is Cell division protein FtsB of Herminiimonas arsenicoxydans.